The chain runs to 1075 residues: Paired amphipathic helix protein pst2 (1075 aa).

3 PAH domains span residues 28–102, 138–208, and 243–319; these read SPNG…LPSS, LPCT…LPSS, and RPDN…TSLS. Phosphoserine is present on residues Ser-641 and Ser-643. The segment at 647-700 is disordered; it reads LTEFVKQPKINGQRESRSAAAARKKEESGNKSQSNSQNSLSDESGNVTPVSKKQ. Residues 658 to 675 are compositionally biased toward basic and acidic residues; that stretch reads GQRESRSAAAARKKEESG. Residues 676 to 691 show a composition bias toward low complexity; that stretch reads NKSQSNSQNSLSDESG.

Heterotetramer of alp13, clr6, prw1 and pst2.

It is found in the nucleus. Functionally, has a role in chromatin assembly and chromosome segregation. Involved in the deacetylation of histones. The chain is Paired amphipathic helix protein pst2 (pst2) from Schizosaccharomyces pombe (strain 972 / ATCC 24843) (Fission yeast).